A 71-amino-acid polypeptide reads, in one-letter code: Large ribosomal subunit protein uL29 (71 aa).

The protein belongs to the universal ribosomal protein uL29 family.

This Rickettsia africae (strain ESF-5) protein is Large ribosomal subunit protein uL29.